Reading from the N-terminus, the 37-residue chain is MKVRASVKKMCDKCRVIRRHGRVMVICSTPKHKQRQG.

The protein belongs to the bacterial ribosomal protein bL36 family.

In Prochlorococcus marinus (strain MIT 9313), this protein is Large ribosomal subunit protein bL36.